The following is a 338-amino-acid chain: UPF0324 membrane protein NMA0465 (338 aa).

A run of 10 helical transmembrane segments spans residues 5–23 (PFYF…ANYL), 33–55 (HISA…YPQF), 62–84 (GVLF…RLTF), 94–116 (AVVT…GIRY), 123–145 (LVYL…AESV), 155–177 (VAIA…FYTW), 222–239 (IRVM…WLLT), 254–273 (IPWF…FDLL), 280–302 (LFVE…TTHA), and 312–334 (PFVL…NYGI).

It belongs to the UPF0324 family.

The protein resides in the cell membrane. The sequence is that of UPF0324 membrane protein NMA0465 from Neisseria meningitidis serogroup A / serotype 4A (strain DSM 15465 / Z2491).